The chain runs to 634 residues: Lamin tail domain-containing protein 2 (634 aa).

Residues 1–44 are disordered; the sequence is MRWLRPAGRRREQESVSGHLGPPAGAPAAPETPTCLPDTTPHPA. A coiled-coil region spans residues 106–169; the sequence is SHSQEKLLQN…QKSCLLQLAR (64 aa). Over residues 228 to 237 the composition is skewed to polar residues; it reads FTNMEPSSKQ. Disordered regions lie at residues 228 to 349 and 464 to 575; these read FTNM…TDPD and HRIP…PAEA. A compositionally biased stretch (low complexity) spans 276 to 287; the sequence is SSSGGADSDSSS. Polar residues predominate over residues 310-321; the sequence is SEQALVQAGSYS. Residues 322–337 show a composition bias toward basic and acidic residues; sequence RDSEDLQKTHSPRHGE. The LTD domain occupies 350–468; the sequence is HWSPELLQSP…EVLSEHRIPR (119 aa). Residues 502 to 513 show a composition bias toward basic residues; sequence PPRPPRPLRKGR. The segment covering 540-550 has biased composition (basic and acidic residues); sequence HAREGPARPEN.

This is Lamin tail domain-containing protein 2 (LMNTD2) from Homo sapiens (Human).